Consider the following 118-residue polypeptide: Co-chaperonin GroES (118 aa).

This sequence belongs to the GroES chaperonin family. Heptamer of 7 subunits arranged in a ring. Interacts with the chaperonin GroEL.

The protein resides in the cytoplasm. In terms of biological role, together with the chaperonin GroEL, plays an essential role in assisting protein folding. The GroEL-GroES system forms a nano-cage that allows encapsulation of the non-native substrate proteins and provides a physical environment optimized to promote and accelerate protein folding. GroES binds to the apical surface of the GroEL ring, thereby capping the opening of the GroEL channel. In Helicobacter pylori (strain G27), this protein is Co-chaperonin GroES.